The chain runs to 374 residues: tRNA-specific 2-thiouridylase MnmA (374 aa).

ATP contacts are provided by residues 16 to 23 (GMSGGVDS) and Met-42. Residues 102 to 104 (NPD) form an interaction with target base in tRNA region. Cys-107 acts as the Nucleophile in catalysis. Cysteines 107 and 203 form a disulfide. Gly-131 provides a ligand contact to ATP. Residues 153–155 (KDQ) form an interaction with tRNA region. Cys-203 (cysteine persulfide intermediate) is an active-site residue. Residues 311–312 (RY) are interaction with tRNA.

Belongs to the MnmA/TRMU family.

The protein localises to the cytoplasm. The enzyme catalyses S-sulfanyl-L-cysteinyl-[protein] + uridine(34) in tRNA + AH2 + ATP = 2-thiouridine(34) in tRNA + L-cysteinyl-[protein] + A + AMP + diphosphate + H(+). Functionally, catalyzes the 2-thiolation of uridine at the wobble position (U34) of tRNA, leading to the formation of s(2)U34. The protein is tRNA-specific 2-thiouridylase MnmA of Exiguobacterium sibiricum (strain DSM 17290 / CCUG 55495 / CIP 109462 / JCM 13490 / 255-15).